A 361-amino-acid chain; its full sequence is Cytochrome P450 family protein EryCII (361 aa).

It belongs to the cytochrome P450 family. As to quaternary structure, heterotetramer composed of EryCII and EryCIII.

It functions in the pathway antibiotic biosynthesis; erythromycin biosynthesis. Its function is as follows. Involved in the erythromycin biosynthesis pathway. Acts by forming a complex and stabilizing the desosaminyl transferase EryCIII. This Saccharopolyspora erythraea (strain ATCC 11635 / DSM 40517 / JCM 4748 / NBRC 13426 / NCIMB 8594 / NRRL 2338) protein is Cytochrome P450 family protein EryCII (eryCII).